Here is a 361-residue protein sequence, read N- to C-terminus: GDSL esterase/lipase At2g40250 (361 aa).

Residues 1 to 28 (MNRNQHKPMFVTFLINILLLQLLNLTNA) form the signal peptide. The active-site Nucleophile is S43. Active-site residues include D337 and H340.

The protein belongs to the 'GDSL' lipolytic enzyme family.

It localises to the secreted. The chain is GDSL esterase/lipase At2g40250 from Arabidopsis thaliana (Mouse-ear cress).